The sequence spans 425 residues: Neuromedin-U receptor 1 (425 aa).

The Extracellular segment spans residues 1-59 (MTPPCLNCSFFPGQLSPNASTGLLSCNDSEFKEHFDLEDLNLTHEDLRLKYLGPQQVKQ). Asn41 carries an N-linked (GlcNAc...) asparagine glycan. Residues 60–80 (FLPICVTYLLIFVVGTLGNGL) form a helical membrane-spanning segment. Topologically, residues 81–96 (TCTVILRQKAMHTPTN) are cytoplasmic. A helical membrane pass occupies residues 97–117 (FYLFSLAVSDLLVLLVGLPLE). Residues 118-137 (LYEMQHNYPFQLGAGGCYFR) are Extracellular-facing. Cys134 and Cys219 form a disulfide bridge. The chain crosses the membrane as a helical span at residues 138–158 (ILLLETVCLASVLNVTALSVE). Topologically, residues 159–181 (RYVAVVHPLQAKSVMTRTHVRRM) are cytoplasmic. A helical membrane pass occupies residues 182-202 (LGAIWVFAILFSLPNTSLHGL). Over 203–235 (SPLYVPCRGPVPDSVTCTLVRPQFFYKLVIQTT) the chain is Extracellular. The helical transmembrane segment at 236–256 (ILLFFCLPMVTISVLYLLIGL) threads the bilayer. At 257–294 (RLRRERILLQEEVKGRISAAARQASHRSIQLRDRERRQ) the chain is on the cytoplasmic side. Residues 295 to 315 (VTKMLIALVIVFGTCWVPFHA) traverse the membrane as a helical segment. Over 316–331 (DRLMWSMVSHWTDGLR) the chain is Extracellular. A helical membrane pass occupies residues 332 to 352 (LAFQSVHLASGVFLYLGSAAN). Residues 353–425 (PVLYNLMSTR…GCEQETDPPE (73 aa)) lie on the Cytoplasmic side of the membrane. The segment at 406 to 425 (DVPLAENRDPGCEQETDPPE) is disordered.

The protein belongs to the G-protein coupled receptor 1 family. As to expression, highly expressed in the small intestine and lung. Low expression in the central nervous system.

It is found in the cell membrane. Its function is as follows. Receptor for the neuromedin-U and neuromedin-S neuropeptides. This is Neuromedin-U receptor 1 (Nmur1) from Rattus norvegicus (Rat).